A 493-amino-acid polypeptide reads, in one-letter code: MERSPDVSPGPSRSFKEELLCAVCYDPFRDAVTLRCGHNFCRGCVSRCWEVQVSPTCPVCKDRASPADLRTNHTLNNLVEKLLREEAEGARWTSYRFSRVCRLHRGQLSLFCLEDKELLCCSCQADPRHQGHRVQPVKDTAHDFRAKCRNMEHALREKAKAFWAMRRSYEAIAKHNQVEAAWLEGRIRQEFDKLREFLRVEEQAILDAMAEETRQKQLLADEKMKQLTEETEVLAHEIERLQMEMKEDDVSFLMKHKSRKRRLFCTMEPEPVQPGMLIDVCKYLGSLQYRVWKKMLASVESVPFSFDPNTAAGWLSVSDDLTSVTNHGYRVQVENPERFSSAPCLLGSRVFSQGSHAWEVALGGLQSWRVGVVRVRQDSGAEGHSHSCYHDTRSGFWYVCRTQGVEGDHCVTSDPATSPLVLAIPRRLRVELECEEGELSFYDAERHCHLYTFHARFGEVRPYFYLGGARGAGPPEPLRICPLHISVKEELDG.

Met-1 carries the N-acetylmethionine modification. Phosphoserine is present on residues Ser-4 and Ser-8. The RING-type zinc finger occupies 21–61 (CAVCYDPFRDAVTLRCGHNFCRGCVSRCWEVQVSPTCPVCK). Residues 96–137 (RFSRVCRLHRGQLSLFCLEDKELLCCSCQADPRHQGHRVQPV) form a B box-type zinc finger. Positions 101, 104, 123, and 129 each coordinate Zn(2+). Residues 210–251 (AEETRQKQLLADEKMKQLTEETEVLAHEIERLQMEMKEDDVS) are a coiled coil. Residues 284–487 (LGSLQYRVWK…LRICPLHISV (204 aa)) form the B30.2/SPRY domain.

The protein belongs to the TRIM/RBCC family. In terms of assembly, interacts with PKM isoform M2, but not isoform M1; this interaction may compete with that between PKM and FGFR1, and hence reduces FGFR1-dependent tyrosine phosphorylation of PKM. Interacts with IRF7; this interaction promotes IRF7 proteasomal degradation. Interacts with TRAF3; this interaction promotes TRAF3 activation.

Its subcellular location is the cytoplasm. It localises to the nucleus. It catalyses the reaction S-ubiquitinyl-[E2 ubiquitin-conjugating enzyme]-L-cysteine + [acceptor protein]-L-lysine = [E2 ubiquitin-conjugating enzyme]-L-cysteine + N(6)-ubiquitinyl-[acceptor protein]-L-lysine.. The protein operates within protein modification; protein ubiquitination. In terms of biological role, E3 ubiquitin-protein ligase that participates in multiple biological processes including cell death, glucose metabolism, and in particular, the innate immune response. Mediates 'Lys-63'-linked polyubiquitination of TRAF3 thereby promoting type I interferon production via RIG-I signaling pathway. Can also catalyze 'Lys-48'-linked polyubiquitination and proteasomal degradation of viral proteins such as influenza virus PB2. Acts as a negative feedback regulator of TLR7- and TLR9-triggered signaling. Mechanistically, promotes the 'Lys-48'-linked ubiquitination of IRF7 and induces its degradation via a proteasome-dependent pathway. Reduces FGFR1-dependent tyrosine phosphorylation of PKM, inhibiting PKM-dependent lactate production, glucose metabolism, and cell growth. This Homo sapiens (Human) protein is E3 ubiquitin-protein ligase TRIM35 (TRIM35).